Reading from the N-terminus, the 683-residue chain is Probable serine/threonine-protein kinase HAL5-like (683 aa).

Disordered stretches follow at residues 1 to 90 and 157 to 200; these read MPQQ…VSDE and YPQN…SKKA. Positions 36 to 48 are enriched in low complexity; the sequence is PSSAATSDSSEMS. The segment covering 50 to 60 has biased composition (gly residues); the sequence is AQGGRGNGLLG. A compositionally biased stretch (polar residues) spans 69–85; that stretch reads SPKSEAQFTQRNKSAES. A Protein kinase domain is found at 364-670; the sequence is GKCIGMIGQG…IPKLLDTPWM (307 aa). Residues 370 to 378 and K411 each bind ATP; that span reads IGQGAYGTV. Catalysis depends on D521, which acts as the Proton acceptor.

Belongs to the protein kinase superfamily. CAMK Ser/Thr protein kinase family. NPR/HAL subfamily. HAL5 sub-subfamily.

The catalysed reaction is L-seryl-[protein] + ATP = O-phospho-L-seryl-[protein] + ADP + H(+). It carries out the reaction L-threonyl-[protein] + ATP = O-phospho-L-threonyl-[protein] + ADP + H(+). The chain is Probable serine/threonine-protein kinase HAL5-like from Eremothecium gossypii (strain ATCC 10895 / CBS 109.51 / FGSC 9923 / NRRL Y-1056) (Yeast).